A 292-amino-acid polypeptide reads, in one-letter code: Elongation factor Ts (292 aa).

Positions 79–82 are involved in Mg(2+) ion dislocation from EF-Tu; it reads TDFV.

Belongs to the EF-Ts family.

It localises to the cytoplasm. Associates with the EF-Tu.GDP complex and induces the exchange of GDP to GTP. It remains bound to the aminoacyl-tRNA.EF-Tu.GTP complex up to the GTP hydrolysis stage on the ribosome. This Xylella fastidiosa (strain Temecula1 / ATCC 700964) protein is Elongation factor Ts.